Here is a 248-residue protein sequence, read N- to C-terminus: Methionine aminopeptidase (248 aa).

Residue H77 participates in substrate binding. Residues D94, D105, and H169 each coordinate a divalent metal cation. Residue H176 coordinates substrate. E202 and E233 together coordinate a divalent metal cation.

Belongs to the peptidase M24A family. Methionine aminopeptidase type 1 subfamily. Monomer. It depends on Co(2+) as a cofactor. Requires Zn(2+) as cofactor. The cofactor is Mn(2+). Fe(2+) serves as cofactor.

It carries out the reaction Release of N-terminal amino acids, preferentially methionine, from peptides and arylamides.. Removes the N-terminal methionine from nascent proteins. The N-terminal methionine is often cleaved when the second residue in the primary sequence is small and uncharged (Met-Ala-, Cys, Gly, Pro, Ser, Thr, or Val). Requires deformylation of the N(alpha)-formylated initiator methionine before it can be hydrolyzed. The polypeptide is Methionine aminopeptidase (Mycoplasma genitalium (strain ATCC 33530 / DSM 19775 / NCTC 10195 / G37) (Mycoplasmoides genitalium)).